We begin with the raw amino-acid sequence, 247 residues long: E3 ubiquitin-protein ligase RNF182 (247 aa).

Residues 20–68 (CKICYNRYNLKQRKPKVLECCHRVCAKCLYKIIDFGDSPQGVIVCPFCR) form an RING-type zinc finger. A run of 2 helical transmembrane segments spans residues 184 to 204 (VLVWLLGLLYFSSLPLGIYLL) and 211 to 231 (LGVVFVSLVPSSLVILMVYGF).

As to quaternary structure, interacts with ATP6V0C. Up-regulated in neuronal cells subjected to cell death-inducing injuries, such as oxygen and glucose deprivation (at protein level). Could be up-regulated in Alzheimer disease brains. Highly expressed in innate immune organs such as lymph nodes and spleen and in immune cells such as macrophages and dendritic cells.

It is found in the membrane. The protein resides in the cytoplasm. It carries out the reaction S-ubiquitinyl-[E2 ubiquitin-conjugating enzyme]-L-cysteine + [acceptor protein]-L-lysine = [E2 ubiquitin-conjugating enzyme]-L-cysteine + N(6)-ubiquitinyl-[acceptor protein]-L-lysine.. The protein operates within protein modification; protein ubiquitination. E3 ubiquitin-protein ligase that mediates the ubiquitination of ATP6V0C and targets it to degradation via the ubiquitin-proteasome pathway. Also plays a role in the inhibition of TLR-triggered innate immune response by mediating 'Lys'-48-linked ubiquitination and subsequent degradation of NF-kappa-B component RELA. The protein is E3 ubiquitin-protein ligase RNF182 (RNF182) of Homo sapiens (Human).